A 331-amino-acid chain; its full sequence is Holliday junction branch migration complex subunit RuvB (331 aa).

Residues 1 to 182 are large ATPase domain (RuvB-L); it reads MDDRMVDQAL…FGVHLRLEYY (182 aa). ATP contacts are provided by residues Leu21, Arg22, Gly63, Lys66, Thr67, Thr68, 129-131, Arg172, Tyr182, and Arg219; that span reads EDF. Thr67 lines the Mg(2+) pocket. The segment at 183–253 is small ATPAse domain (RuvB-S); the sequence is NENDLKEIII…TTKQALQLLQ (71 aa). Residues 256–331 are head domain (RuvB-H); that stretch reads AEGLDYIDHK…AYEHFKNFNK (76 aa). Residues Arg292, Arg311, and Arg316 each coordinate DNA.

The protein belongs to the RuvB family. Homohexamer. Forms an RuvA(8)-RuvB(12)-Holliday junction (HJ) complex. HJ DNA is sandwiched between 2 RuvA tetramers; dsDNA enters through RuvA and exits via RuvB. An RuvB hexamer assembles on each DNA strand where it exits the tetramer. Each RuvB hexamer is contacted by two RuvA subunits (via domain III) on 2 adjacent RuvB subunits; this complex drives branch migration. In the full resolvosome a probable DNA-RuvA(4)-RuvB(12)-RuvC(2) complex forms which resolves the HJ.

The protein resides in the cytoplasm. It carries out the reaction ATP + H2O = ADP + phosphate + H(+). Functionally, the RuvA-RuvB-RuvC complex processes Holliday junction (HJ) DNA during genetic recombination and DNA repair, while the RuvA-RuvB complex plays an important role in the rescue of blocked DNA replication forks via replication fork reversal (RFR). RuvA specifically binds to HJ cruciform DNA, conferring on it an open structure. The RuvB hexamer acts as an ATP-dependent pump, pulling dsDNA into and through the RuvAB complex. RuvB forms 2 homohexamers on either side of HJ DNA bound by 1 or 2 RuvA tetramers; 4 subunits per hexamer contact DNA at a time. Coordinated motions by a converter formed by DNA-disengaged RuvB subunits stimulates ATP hydrolysis and nucleotide exchange. Immobilization of the converter enables RuvB to convert the ATP-contained energy into a lever motion, pulling 2 nucleotides of DNA out of the RuvA tetramer per ATP hydrolyzed, thus driving DNA branch migration. The RuvB motors rotate together with the DNA substrate, which together with the progressing nucleotide cycle form the mechanistic basis for DNA recombination by continuous HJ branch migration. Branch migration allows RuvC to scan DNA until it finds its consensus sequence, where it cleaves and resolves cruciform DNA. The chain is Holliday junction branch migration complex subunit RuvB from Staphylococcus haemolyticus (strain JCSC1435).